Reading from the N-terminus, the 136-residue chain is Ribulose bisphosphate carboxylase small subunit, chloroplastic 1 (136 aa).

A chloroplast-targeting transit peptide spans 1 to 13 (NTDITSNGERVKC).

The protein belongs to the RuBisCO small chain family. Heterohexadecamer of 8 large and 8 small subunits.

It localises to the plastid. Its subcellular location is the chloroplast. Its function is as follows. RuBisCO catalyzes two reactions: the carboxylation of D-ribulose 1,5-bisphosphate, the primary event in carbon dioxide fixation, as well as the oxidative fragmentation of the pentose substrate. Both reactions occur simultaneously and in competition at the same active site. Although the small subunit is not catalytic it is essential for maximal activity. The sequence is that of Ribulose bisphosphate carboxylase small subunit, chloroplastic 1 from Pisum sativum (Garden pea).